A 156-amino-acid chain; its full sequence is Oxidized purine nucleoside triphosphate hydrolase (156 aa).

Positions 3–132 constitute a Nudix hydrolase domain; sequence ASRLYTLVLV…WFPLLLQKKK (130 aa). Residue threonine 8 participates in 2-oxo-dATP binding. 8-oxo-dGMP-binding residues include threonine 8 and lysine 23. Residues threonine 8 and lysine 23 each contribute to the 8-oxo-dGTP site. Threonine 8 and lysine 23 together coordinate N(6)-methyl-AMP. Threonine 8 and lysine 23 together coordinate O(6)-methyl-dGMP. Phenylalanine 27 is an 8-oxo-ATP binding site. Residues asparagine 33 and 35–38 each bind 2-oxo-dATP; that span reads FGGK. Asparagine 33 contributes to the 8-oxo-dGMP binding site. 8-oxo-dGTP contacts are provided by residues asparagine 33 and 35–38; that span reads FGGK. Asparagine 33 contacts O(6)-methyl-dGMP. 8-oxo-ATP contacts are provided by residues 35-38 and glutamate 52; that span reads FGGK. Mg(2+) contacts are provided by glycine 36, glutamate 52, glutamate 55, glutamate 56, and glutamate 100. The Nudix box motif lies at 37-58; the sequence is GKVQEGETIEDGARRELQEESG. Glutamate 56 provides a ligand contact to 8-oxo-ATP. 117–120 is a binding site for 2-oxo-dATP; sequence WPDD. 117 to 120 provides a ligand contact to 8-oxo-dGMP; sequence WPDD. Residue 117–120 coordinates 8-oxo-dGTP; it reads WPDD. Position 117 to 120 (117 to 120) interacts with N(6)-methyl-AMP; sequence WPDD. 117–120 serves as a coordination point for O(6)-methyl-dGMP; it reads WPDD. 117–120 is a binding site for 8-oxo-ATP; that stretch reads WPDD.

This sequence belongs to the Nudix hydrolase family. Monomer. Requires Mg(2+) as cofactor. Post-translationally, the N-terminus is blocked. Widely expressed with highest expression in thymus, testis, embryo and proliferating blood lymphocytes.

It is found in the cytoplasm. The protein localises to the cytosol. The protein resides in the mitochondrion matrix. It localises to the nucleus. The enzyme catalyses 2-oxo-dATP + H2O = 2-oxo-dAMP + diphosphate + H(+). It catalyses the reaction 2-oxo-ATP + H2O = 2-oxo-AMP + diphosphate + H(+). The catalysed reaction is 8-oxo-dGTP + H2O = 8-oxo-dGMP + diphosphate + H(+). It carries out the reaction 8-oxo-dATP + H2O = 8-oxo-dAMP + diphosphate + H(+). The enzyme catalyses O(6)-methyl-dGTP + H2O = O(6)-methyl-dGMP + diphosphate + H(+). It catalyses the reaction N(6)-methyl-dATP + H2O = N(6)-methyl-dAMP + diphosphate + H(+). The catalysed reaction is N(6)-methyl-ATP + H2O = N(6)-methyl-AMP + diphosphate + H(+). With respect to regulation, inhibited by 2-oxo-dADP and 8-oxo-dGDP. Functionally, oxidized purine nucleoside triphosphate hydrolase which is a prominent sanitizer of the oxidized nucleotide pool. Catalyzes the hydrolysis of 2-oxo-dATP (2-hydroxy-dATP) into 2-oxo-dAMP. Also has a significant hydrolase activity toward 2-oxo-ATP, 8-oxo-dGTP and 8-oxo-dATP. Through the hydrolysis of oxidized purine nucleoside triphosphates, prevents their incorporation into DNA and the subsequent transversions A:T to C:G and G:C to T:A. Also catalyzes the hydrolysis of methylated purine nucleoside triphosphate preventing their integration into DNA. Through this antimutagenic activity protects cells from oxidative stress. The protein is Oxidized purine nucleoside triphosphate hydrolase (NUDT1) of Homo sapiens (Human).